Consider the following 117-residue polypeptide: Ribosome-binding factor A (117 aa).

Belongs to the RbfA family. In terms of assembly, monomer. Binds 30S ribosomal subunits, but not 50S ribosomal subunits or 70S ribosomes.

It localises to the cytoplasm. In terms of biological role, one of several proteins that assist in the late maturation steps of the functional core of the 30S ribosomal subunit. Associates with free 30S ribosomal subunits (but not with 30S subunits that are part of 70S ribosomes or polysomes). Required for efficient processing of 16S rRNA. May interact with the 5'-terminal helix region of 16S rRNA. This is Ribosome-binding factor A from Leuconostoc citreum (strain KM20).